The following is a 447-amino-acid chain: Hemopexin (447 aa).

The first 18 residues, M1–A18, serve as a signal peptide directing secretion. The disordered stretch occupies residues P20–H44. Residues Q22–H44 are compositionally biased toward basic and acidic residues. 8 Hemopexin repeats span residues G53–L93, L99–I151, P152–M197, P198–C243, R262–L304, H305–I351, E352–Q395, and F396–Q441. A glycan (N-linked (GlcNAc...) asparagine) is linked at N87. Residues N168 and N199 are each glycosylated (N-linked (GlcNAc...) asparagine). Heme is bound at residue H293.

It belongs to the hemopexin family.

The protein resides in the secreted. Binds heme and transports it to the liver for breakdown and iron recovery, after which the free hemopexin returns to the circulation. The polypeptide is Hemopexin (Danio rerio (Zebrafish)).